The chain runs to 119 residues: Ribonuclease P protein component (119 aa).

Belongs to the RnpA family. In terms of assembly, consists of a catalytic RNA component (M1 or rnpB) and a protein subunit.

The enzyme catalyses Endonucleolytic cleavage of RNA, removing 5'-extranucleotides from tRNA precursor.. Its function is as follows. RNaseP catalyzes the removal of the 5'-leader sequence from pre-tRNA to produce the mature 5'-terminus. It can also cleave other RNA substrates such as 4.5S RNA. The protein component plays an auxiliary but essential role in vivo by binding to the 5'-leader sequence and broadening the substrate specificity of the ribozyme. This is Ribonuclease P protein component from Pediococcus pentosaceus (strain ATCC 25745 / CCUG 21536 / LMG 10740 / 183-1w).